The chain runs to 843 residues: RNA-binding protein 25 (843 aa).

Residues 1–30 (MSFPPHLNRPPMGIPALPPGIPPPQFPGFP) form a disordered region. Residues 12–30 (MGIPALPPGIPPPQFPGFP) are compositionally biased toward pro residues. An RRM domain is found at 87–164 (TTVFVGNISE…KKLLVKVDAK (78 aa)). Position 135 is an N6-acetyllysine (Lys135). 2 disordered regions span residues 171–202 (EWKAKKKASNGNARPETVTNDDEEALDEETKR) and 219–243 (SSELNAPSQESDSHPRKKKKEKKED). Ser226 and Ser229 each carry phosphoserine. Residues Lys261, Lys273, and Lys430 each participate in a glycyl lysine isopeptide (Lys-Gly) (interchain with G-Cter in SUMO2) cross-link. Basic and acidic residues-rich tracts occupy residues 280–433 (EISK…KRDR) and 521–573 (RLRD…ERRR). Disordered regions lie at residues 280 to 442 (EISK…DAYE) and 498 to 688 (EFLE…KRKK). The tract at residues 285–644 (RDTHKKLEEE…PNTPGDESPC (360 aa)) is necessary for nuclear speckle localization. Residue Lys578 forms a Glycyl lysine isopeptide (Lys-Gly) (interchain with G-Cter in SUMO2) linkage. Ser583 carries the phosphoserine modification. Positions 590–599 (KQEKEEKREE) are enriched in basic and acidic residues. Positions 621 to 630 (SSAPSVSSAS) are enriched in low complexity. Residue Lys671 forms a Glycyl lysine isopeptide (Lys-Gly) (interchain with G-Cter in SUMO2) linkage. Residues 674-683 (ASNSPGQPNS) are compositionally biased toward polar residues. Residues Ser677 and Ser683 each carry the phosphoserine modification. Residues Lys688 and Lys697 each participate in a glycyl lysine isopeptide (Lys-Gly) (interchain with G-Cter in SUMO2) cross-link. Residue Ser703 is modified to Phosphoserine. Residue Lys722 forms a Glycyl lysine isopeptide (Lys-Gly) (interchain with G-Cter in SUMO2) linkage. In terms of domain architecture, PWI spans 750-843 (PELFAYPLDW…TEAKKIGLVK (94 aa)).

As to quaternary structure, interacts with LUC7L3 and SRRM1. Specifically associates with functional splicing complexes, including Sm proteins and U1, U2, U4, U5 and U6 snRNAs. Associates with exon junction complex (EJC) proteins, including APEX1, DDX39B, NCBP1, RBM8A and RNPS1. Interaction with NCBP1 is RNA-dependent. In terms of processing, sumoylated.

It localises to the nucleus speckle. It is found in the cytoplasm. Functionally, RNA-binding protein that acts as a regulator of alternative pre-mRNA splicing. Involved in apoptotic cell death through the regulation of the apoptotic factor BCL2L1 isoform expression. Modulates the ratio of proapoptotic BCL2L1 isoform S to antiapoptotic BCL2L1 isoform L mRNA expression. When overexpressed, stimulates proapoptotic BCL2L1 isoform S 5'-splice site (5'-ss) selection, whereas its depletion caused the accumulation of antiapoptotic BCL2L1 isoform L. Promotes BCL2L1 isoform S 5'-ss usage through the 5'-CGGGCA-3' RNA sequence. Its association with LUC7L3 promotes U1 snRNP binding to a weak 5' ss in a 5'-CGGGCA-3'-dependent manner. Binds to the exonic splicing enhancer 5'-CGGGCA-3' RNA sequence located within exon 2 of the BCL2L1 pre-mRNA. Also involved in the generation of an abnormal and truncated splice form of SCN5A in heart failure. This Homo sapiens (Human) protein is RNA-binding protein 25 (RBM25).